Consider the following 127-residue polypeptide: Small ribosomal subunit protein uS12 (127 aa).

A 3-methylthioaspartic acid modification is found at aspartate 89.

The protein belongs to the universal ribosomal protein uS12 family. In terms of assembly, part of the 30S ribosomal subunit. Contacts proteins S8 and S17. May interact with IF1 in the 30S initiation complex.

Its function is as follows. With S4 and S5 plays an important role in translational accuracy. Interacts with and stabilizes bases of the 16S rRNA that are involved in tRNA selection in the A site and with the mRNA backbone. Located at the interface of the 30S and 50S subunits, it traverses the body of the 30S subunit contacting proteins on the other side and probably holding the rRNA structure together. The combined cluster of proteins S8, S12 and S17 appears to hold together the shoulder and platform of the 30S subunit. The polypeptide is Small ribosomal subunit protein uS12 (Nautilia profundicola (strain ATCC BAA-1463 / DSM 18972 / AmH)).